The primary structure comprises 55 residues: Large ribosomal subunit protein bL33B (55 aa).

Belongs to the bacterial ribosomal protein bL33 family.

The protein is Large ribosomal subunit protein bL33B of Salinispora arenicola (strain CNS-205).